Here is a 209-residue protein sequence, read N- to C-terminus: Ribosomal RNA large subunit methyltransferase E (209 aa).

The S-adenosyl-L-methionine site is built by Gly-63, Trp-65, Asp-83, Asp-99, and Asp-124. Lys-164 serves as the catalytic Proton acceptor.

This sequence belongs to the class I-like SAM-binding methyltransferase superfamily. RNA methyltransferase RlmE family.

It is found in the cytoplasm. It catalyses the reaction uridine(2552) in 23S rRNA + S-adenosyl-L-methionine = 2'-O-methyluridine(2552) in 23S rRNA + S-adenosyl-L-homocysteine + H(+). In terms of biological role, specifically methylates the uridine in position 2552 of 23S rRNA at the 2'-O position of the ribose in the fully assembled 50S ribosomal subunit. In Aliivibrio fischeri (strain MJ11) (Vibrio fischeri), this protein is Ribosomal RNA large subunit methyltransferase E.